Consider the following 480-residue polypeptide: UDP-glucose 6-dehydrogenase 3 (480 aa).

NAD(+) is bound by residues 8-13, Asp-33, Arg-38, 86-90, 127-128, and Glu-161; these read GAGYVG, VNTPT, and ST. Substrate-binding positions include 157-161, 216-223, and 256-269; these read EFLAE, KLAANAFL, and RIGP…VGFG. Catalysis depends on Cys-272, which acts as the Nucleophile. Residue 272-275 coordinates NAD(+); it reads CFQK. 334–335 provides a ligand contact to substrate; sequence FK. Arg-342 contributes to the NAD(+) binding site. At Ser-393 the chain carries Phosphoserine. Arg-447 lines the substrate pocket.

This sequence belongs to the UDP-glucose/GDP-mannose dehydrogenase family.

The enzyme catalyses UDP-alpha-D-glucose + 2 NAD(+) + H2O = UDP-alpha-D-glucuronate + 2 NADH + 3 H(+). It participates in nucleotide-sugar biosynthesis; UDP-alpha-D-glucuronate biosynthesis; UDP-alpha-D-glucuronate from UDP-alpha-D-glucose: step 1/1. In terms of biological role, involved in the biosynthesis of UDP-glucuronic acid (UDP-GlcA), providing nucleotide sugars for cell-wall polymers. This Oryza sativa subsp. japonica (Rice) protein is UDP-glucose 6-dehydrogenase 3 (UGD3).